We begin with the raw amino-acid sequence, 289 residues long: Mas-related G-protein coupled receptor member G (289 aa).

The Extracellular portion of the chain corresponds to 1-13 (MFSIFNIWGTFNK). The chain crosses the membrane as a helical span at residues 14-34 (VLFFLSLTVSLAGLVGNALLL). The Cytoplasmic segment spans residues 35–52 (WHLGLHIKKGPFNTYLLH). The chain crosses the membrane as a helical span at residues 53–73 (LAAADFLFLSCQVGFSIATIV). The Extracellular portion of the chain corresponds to 74–78 (SGHED). The helical transmembrane segment at 79 to 99 (TLYFPVTFLWFAVGLWLLAAF) threads the bilayer. Topologically, residues 100 to 120 (SVDCCLAYMFPSFCSPNRRPR) are cytoplasmic. Residues 121–141 (FTSVVLCLVIWALTMPAVLLP) form a helical membrane-spanning segment. Over 142–164 (ANACGLLKNGMSLLVCLKYHWTS) the chain is Extracellular. Residues 165–185 (VTWLAVLSGMACGASKFLLIF) traverse the membrane as a helical segment. The Cytoplasmic segment spans residues 186-199 (GNCCSSQPPPKFCK). A helical membrane pass occupies residues 200–220 (LAQCSGILLFFCRLPLVVYWC). Over 221–222 (LR) the chain is Extracellular. Residues 223 to 243 (PVLKFLLPFFFPLATLLACID) form a helical membrane-spanning segment. The Cytoplasmic portion of the chain corresponds to 244-289 (SSAKPLLYYMKGRQLRKDPLQVALNRALGEESQSGLGGLSLPMHQV).

It belongs to the G-protein coupled receptor 1 family. Mas subfamily.

Its subcellular location is the cell membrane. Functionally, orphan receptor. May regulate nociceptor function and/or development, including the sensation or modulation of pain. The sequence is that of Mas-related G-protein coupled receptor member G (Mrgprg) from Mus musculus (Mouse).